An 89-amino-acid polypeptide reads, in one-letter code: Small ribosomal subunit protein uS15 (89 aa).

It belongs to the universal ribosomal protein uS15 family. As to quaternary structure, part of the 30S ribosomal subunit. Forms a bridge to the 50S subunit in the 70S ribosome, contacting the 23S rRNA.

One of the primary rRNA binding proteins, it binds directly to 16S rRNA where it helps nucleate assembly of the platform of the 30S subunit by binding and bridging several RNA helices of the 16S rRNA. Its function is as follows. Forms an intersubunit bridge (bridge B4) with the 23S rRNA of the 50S subunit in the ribosome. This is Small ribosomal subunit protein uS15 from Staphylococcus carnosus (strain TM300).